The sequence spans 396 residues: MAKEKFERNKPHVNIGTIGHVDHGKTSLTAAITKVLAKTGGATFLAYDLIDKAPEERERGITISTSHVEYQTSNRHYAHVDCPGHADYVKNMITGAAQMDGAILVVSAADGPMPQTREHILLARQVGVPYIVVFLNKVDMLDDPELRELVEMEVRDLLKKYEFPGDDIPIIPGSALKALEGDTSDIGEPAILKLMEAVDSYIPTPQRATDKPFLMPVEDVFSISGRGTVATGRVERGIIKVGEEVEVVGLRPTQKTVVTGVEMFRKLLDQGMAGDNIGALVRGLKREDMERGQVLAKPGSITPHTKFKAQIYVLSKEEGGRHTPFFKGYRPQFYFRTTDVTGSVKLPENVEMVMPGDNIAIEVELITPVAMEKELRFAVREGGRTVGAGVVAEIVE.

One can recognise a tr-type G domain in the interval 10–206 (KPHVNIGTIG…AVDSYIPTPQ (197 aa)). The tract at residues 19-26 (GHVDHGKT) is G1. 19 to 26 (GHVDHGKT) serves as a coordination point for GTP. Threonine 26 contributes to the Mg(2+) binding site. The interval 60–64 (GITIS) is G2. Residues 81–84 (DCPG) form a G3 region. GTP is bound by residues 81–85 (DCPGH) and 136–139 (NKVD). The G4 stretch occupies residues 136 to 139 (NKVD). The interval 174-176 (SAL) is G5.

This sequence belongs to the TRAFAC class translation factor GTPase superfamily. Classic translation factor GTPase family. EF-Tu/EF-1A subfamily. As to quaternary structure, monomer.

The protein localises to the cytoplasm. The enzyme catalyses GTP + H2O = GDP + phosphate + H(+). In terms of biological role, GTP hydrolase that promotes the GTP-dependent binding of aminoacyl-tRNA to the A-site of ribosomes during protein biosynthesis. The protein is Elongation factor Tu 2 of Myxococcus xanthus (strain DK1622).